An 85-amino-acid chain; its full sequence is MMSKTGALLLTFMILVLFSMAAADALGERFEDHEQKIREQDAGVGLLSLMGRAVIECSKCDTDCKTQKGCIPVAKTTNNPTYCIC.

The N-terminal stretch at 1 to 21 (MMSKTGALLLTFMILVLFSMA) is a signal peptide. The propeptide occupies 22–52 (AADALGERFEDHEQKIREQDAGVGLLSLMGR).

In terms of processing, contains 3 disulfide bonds. Expressed by the venom duct.

It localises to the secreted. The sequence is that of Teretoxin Tan9.6 from Terebra anilis (Auger snail).